Here is a 454-residue protein sequence, read N- to C-terminus: Golgi reassembly-stacking protein 2 (454 aa).

Glycine 2 carries N-myristoyl glycine lipidation. 2 PDZ GRASP-type domains span residues 15–105 and 111–199; these read EGYH…FCSF and NVWH…YGYL. The GRASP stretch occupies residues 15-215; that stretch reads EGYHVLRVQE…PFEEGKKISL (201 aa). 2 positions are modified to dimethylated arginine: arginine 30 and arginine 47. The interval 194 to 199 is important for membrane binding; that stretch reads IGYGYL. Serine 214 is modified (phosphoserine). Threonine 222 carries the phosphothreonine modification. A Phosphothreonine; by MAPK modification is found at threonine 225. Positions 377-454 are disordered; it reads EGSSAASAGE…VTDANASGAS (78 aa). Position 411 is a phosphoserine (serine 411). Threonine 435 bears the Phosphothreonine mark. 2 positions are modified to phosphoserine: serine 443 and serine 451.

The protein belongs to the GORASP family. Homodimer. Homooligomer. ER stress induces phosphorylation-dependent monomerization. Interacts with BLZF1/Golgin 45. Identified in a complex with RAB2 and GORASP2. Interacts with JAM2 and JAM3. Interacts with members of the p24 cargo receptors. Interacts with CNIH1 and the cytoplasmic domain of transmembrane TGFA, prior its transit in the trans-Golgi. Interacts with KCTD5. Interacts with TMED2 and TMED3. Interacts with SEC16A in response to ER stress. Interacts (via PDZ GRASP-type 1 domain) with core-glycosylated CFTR in response to ER stress. Post-translationally, myristoylated. Myristoylation is essential for the Golgi targeting. In terms of processing, palmitoylated. Phosphorylated in mitotic cells. ER stress-induced phosphorylation at Ser-443 induces monomerization and subsequent relocalization from Golgi to ER which is essential for mediating unconventional (ER/Golgi-independent) trafficking of CFTR to the cell membrane. Detected in lung, brain, heart, liver and testis.

Its subcellular location is the golgi apparatus membrane. It is found in the endoplasmic reticulum membrane. The protein resides in the golgi apparatus. Its function is as follows. Key structural protein of the Golgi apparatus. The membrane cisternae of the Golgi apparatus adhere to each other to form stacks, which are aligned side by side to form the Golgi ribbon. Acting in concert with GORASP1/GRASP65, is required for the formation and maintenance of the Golgi ribbon, and may be dispensable for the formation of stacks. However, other studies suggest that GORASP2 plays a role in the assembly and membrane stacking of the Golgi cisternae, and in the process by which Golgi stacks reform after breakdown during mitosis and meiosis. May regulate the intracellular transport and presentation of a defined set of transmembrane proteins, such as transmembrane TGFA. Required for normal acrosome formation during spermiogenesis and normal male fertility, probably by promoting colocalization of JAM2 and JAM3 at contact sites between germ cells and Sertoli cells. Mediates ER stress-induced unconventional (ER/Golgi-independent) trafficking of core-glycosylated CFTR to cell membrane. The protein is Golgi reassembly-stacking protein 2 (Gorasp2) of Rattus norvegicus (Rat).